The sequence spans 474 residues: MSYQITINNNTTSNVQNIVIADPNLASLGENVVFSDSQGPLSSLYVYDGVWVIKLRSPLSPGQSITITASSGTPNIDPTIALYYNNGSSYSNLTLVGSPTVSIVQDFGGYAISAYASGDFFLVASPTGFTPSSSRLLVVDRWATTPTSLDAVGLRLYADTNDWFGVVRKYVNGAQNVSIEQKISGTYSVVNEIDISQFAAFTDPLVMYLSINGSTANVKVYKQGSNIGTVSGNYSTTPYGNPSMAGYGTVDKHYANFIVLPYEPDPQVTVTPISSPSPTPTPTPTPTPTPTPTPTPTPTPTPTPTPTPTPTPTPTPTPTPTPTPTPTPTPTPTPTPTPTPTPTPTPTPTPTPTPTPTPTPTPTPTPTYDITYVVFDVTPSPTPTPTPTPTPTPTPTPTPTPTPTPTPTPTPTPTPTPTPTPTPTPTPTPTPTPTPTYDITYVIFDVTPSPTPTPTPTPTPTPTPTPTSTTSSNI.

Residues 268–474 (VTVTPISSPS…TPTSTTSSNI (207 aa)) form a disordered region. A compositionally biased stretch (pro residues) spans 275–365 (SPSPTPTPTP…PTPTPTPTPT (91 aa)). One copy of the Thr-Pro(N) repeat lies at 278-367 (PTPTPTPTPT…PTPTPTPTPT (90 aa)). Residues 278-467 (PTPTPTPTPT…PTPTPTPTPT (190 aa)) form a 3 Thr-Pro repeats regions and two near identical repeats region. Positions 368–377 (YDITYVVFDV) form a repeat. Residues 378 to 436 (TPSPTPTPTPTPTPTPTPTPTPTPTPTPTPTPTPTPTPTPTPTPTPTPTPTPTPTPTPT) form a Thr-Pro(N) repeat. A compositionally biased stretch (pro residues) spans 380-434 (SPTPTPTPTPTPTPTPTPTPTPTPTPTPTPTPTPTPTPTPTPTPTPTPTPTPTPT). The segment at residues 437–446 (YDITYVIFDV) is a repeat. Residues 447 to 467 (TPSPTPTPTPTPTPTPTPTPT) form a Thr-Pro(N) repeat. A compositionally biased stretch (pro residues) spans 449–465 (SPTPTPTPTPTPTPTPT).

This is Viral protein TPX from Thermoproteus tenax virus 1 (strain VT3) (TTV1).